A 359-amino-acid chain; its full sequence is Phospho-N-acetylmuramoyl-pentapeptide-transferase (359 aa).

Transmembrane regions (helical) follow at residues 3-23, 55-75, 84-104, 117-137, 156-176, 187-207, 231-251, 255-275, 280-300, and 334-354; these read QIII…PVLI, VAIL…GIAF, GLLV…DDFI, TSKT…VLQF, IATV…LVMS, LDGL…IVTF, LAVI…WNAA, IFMG…LSVT, LLAV…VLQI, and FWLL…GEWL.

This sequence belongs to the glycosyltransferase 4 family. MraY subfamily. Requires Mg(2+) as cofactor.

It is found in the cell membrane. The catalysed reaction is UDP-N-acetyl-alpha-D-muramoyl-L-alanyl-gamma-D-glutamyl-meso-2,6-diaminopimeloyl-D-alanyl-D-alanine + di-trans,octa-cis-undecaprenyl phosphate = di-trans,octa-cis-undecaprenyl diphospho-N-acetyl-alpha-D-muramoyl-L-alanyl-D-glutamyl-meso-2,6-diaminopimeloyl-D-alanyl-D-alanine + UMP. The protein operates within cell wall biogenesis; peptidoglycan biosynthesis. Its function is as follows. Catalyzes the initial step of the lipid cycle reactions in the biosynthesis of the cell wall peptidoglycan: transfers peptidoglycan precursor phospho-MurNAc-pentapeptide from UDP-MurNAc-pentapeptide onto the lipid carrier undecaprenyl phosphate, yielding undecaprenyl-pyrophosphoryl-MurNAc-pentapeptide, known as lipid I. In Mycobacteroides abscessus (strain ATCC 19977 / DSM 44196 / CCUG 20993 / CIP 104536 / JCM 13569 / NCTC 13031 / TMC 1543 / L948) (Mycobacterium abscessus), this protein is Phospho-N-acetylmuramoyl-pentapeptide-transferase.